The primary structure comprises 408 residues: Putative mannan endo-1,4-beta-mannosidase 4 (408 aa).

An N-terminal signal peptide occupies residues 1–23 (MKCLCFIVLLAIVIAQSYVGVEA). Asn-73 carries an N-linked (GlcNAc...) asparagine glycan. 2 residues coordinate substrate: Trp-85 and Asn-201. The active-site Proton donor is Glu-202. Glu-322 acts as the Nucleophile in catalysis. Position 364 (Trp-364) interacts with substrate.

It belongs to the glycosyl hydrolase 5 (cellulase A) family.

Its subcellular location is the secreted. It catalyses the reaction Random hydrolysis of (1-&gt;4)-beta-D-mannosidic linkages in mannans, galactomannans and glucomannans.. In Arabidopsis thaliana (Mouse-ear cress), this protein is Putative mannan endo-1,4-beta-mannosidase 4 (MAN4).